Reading from the N-terminus, the 470-residue chain is MKKLVGSLAAISVLSATGFSYVGYKNVHNQKSVINTHQNEIKRIEKQLKSINNDINIKENELKSLLLEDEKNLISSKDKINKLKQEQRDLVKKDFDQKQMISKLTKDLTNLKLESETKKDQKAKVESELNNLKKTRKHKDELKDYFNKEIKNIQSELKNKTNEFTTNETKIESLKKELDELDKNKDQKKEELKSIKEIINKNYLLLFELNAKLSPYKKLEKQLLELKQQTSLLTKTKEEKQAEIDKQETILKDKQIQLSNLLEEINNNKTKLDQSDNELVNINQQIRDIESQIQNTNDEISKLKEEKEMDLVKVKSDITKINEQVNQLETQSNQTNTNISLLRQQIQKLDKQKETSTLNTQTLEKELNKKNIELEKLIKESESYSTSIKKLESERTQLQTKLDEIIKQNTQKEELIKQLEKELEKLSKRTQRLNVKKILLTSKVSELNKKISDKEKKITSLNKVIESEKK.

Positions 1-24 are cleaved as a signal peptide; it reads MKKLVGSLAAISVLSATGFSYVGY.

This is an uncharacterized protein from Mycoplasma capricolum subsp. capricolum (strain California kid / ATCC 27343 / NCTC 10154).